Consider the following 206-residue polypeptide: Recombination protein RecR (206 aa).

A C4-type zinc finger spans residues 58-73 (CENCHNISDTKVCEIC). In terms of domain architecture, Toprim spans 81–176 (QTICVVEDIR…IISTIARGIS (96 aa)).

Belongs to the RecR family.

Functionally, may play a role in DNA repair. It seems to be involved in an RecBC-independent recombinational process of DNA repair. It may act with RecF and RecO. In Flavobacterium johnsoniae (strain ATCC 17061 / DSM 2064 / JCM 8514 / BCRC 14874 / CCUG 350202 / NBRC 14942 / NCIMB 11054 / UW101) (Cytophaga johnsonae), this protein is Recombination protein RecR.